A 201-amino-acid polypeptide reads, in one-letter code: uncharacterized protein (201 aa).

Residues 15–122 (KNQIQFSTFN…EVLPQIRKTG (108 aa)) enclose the Bro-N domain.

This is an uncharacterized protein from Haemophilus influenzae (strain ATCC 51907 / DSM 11121 / KW20 / Rd).